Here is a 98-residue protein sequence, read N- to C-terminus: NADH-ubiquinone oxidoreductase chain 4L (98 aa).

Transmembrane regions (helical) follow at residues 1–21 (MTHI…GLTF), 26–46 (LLSA…ALAM), and 59–79 (APLL…SLLV).

It belongs to the complex I subunit 4L family.

It localises to the mitochondrion membrane. It catalyses the reaction a ubiquinone + NADH + 5 H(+)(in) = a ubiquinol + NAD(+) + 4 H(+)(out). Its function is as follows. Core subunit of the mitochondrial membrane respiratory chain NADH dehydrogenase (Complex I) which catalyzes electron transfer from NADH through the respiratory chain, using ubiquinone as an electron acceptor. Part of the enzyme membrane arm which is embedded in the lipid bilayer and involved in proton translocation. This chain is NADH-ubiquinone oxidoreductase chain 4L (MT-ND4L), found in Polypterus ornatipinnis (Ornate bichir).